Consider the following 106-residue polypeptide: MTDKTITRAQLSEAVYQEVGLSRNESADLLEAVLDEISGALAKGDAVKISSFGSFSVRSKGQRIGRNPKTGEEVPITPRRVLVFRPSQLLKKKINDGMAAKRGGAK.

The protein belongs to the bacterial histone-like protein family. As to quaternary structure, heterodimer of an alpha and a beta chain.

Functionally, this protein is one of the two subunits of integration host factor, a specific DNA-binding protein that functions in genetic recombination as well as in transcriptional and translational control. This chain is Integration host factor subunit alpha, found in Paramagnetospirillum magneticum (strain ATCC 700264 / AMB-1) (Magnetospirillum magneticum).